We begin with the raw amino-acid sequence, 421 residues long: D-amino acid dehydrogenase (421 aa).

Residue 3–17 (VLVLGGGVVGVTSAY) coordinates FAD.

The protein belongs to the DadA oxidoreductase family. FAD is required as a cofactor.

It carries out the reaction a D-alpha-amino acid + A + H2O = a 2-oxocarboxylate + AH2 + NH4(+). It participates in amino-acid degradation; D-alanine degradation; NH(3) and pyruvate from D-alanine: step 1/1. Functionally, oxidative deamination of D-amino acids. The protein is D-amino acid dehydrogenase of Methylobacterium sp. (strain 4-46).